The sequence spans 556 residues: 2-succinyl-5-enolpyruvyl-6-hydroxy-3-cyclohexene-1-carboxylate synthase (556 aa).

It belongs to the TPP enzyme family. MenD subfamily. As to quaternary structure, homodimer. The cofactor is Mg(2+). Requires Mn(2+) as cofactor. Thiamine diphosphate serves as cofactor.

It catalyses the reaction isochorismate + 2-oxoglutarate + H(+) = 5-enolpyruvoyl-6-hydroxy-2-succinyl-cyclohex-3-ene-1-carboxylate + CO2. It functions in the pathway quinol/quinone metabolism; 1,4-dihydroxy-2-naphthoate biosynthesis; 1,4-dihydroxy-2-naphthoate from chorismate: step 2/7. The protein operates within quinol/quinone metabolism; menaquinone biosynthesis. Catalyzes the thiamine diphosphate-dependent decarboxylation of 2-oxoglutarate and the subsequent addition of the resulting succinic semialdehyde-thiamine pyrophosphate anion to isochorismate to yield 2-succinyl-5-enolpyruvyl-6-hydroxy-3-cyclohexene-1-carboxylate (SEPHCHC). The polypeptide is 2-succinyl-5-enolpyruvyl-6-hydroxy-3-cyclohexene-1-carboxylate synthase (Mycobacterium leprae (strain Br4923)).